The following is a 209-amino-acid chain: Probable glutathione peroxidase 8-A (209 aa).

A helical transmembrane segment spans residues 18-40; that stretch reads VSVVFLSMLLCTGILCVLQLGFL. Residue Cys-79 is part of the active site.

This sequence belongs to the glutathione peroxidase family.

The protein resides in the membrane. It carries out the reaction 2 glutathione + H2O2 = glutathione disulfide + 2 H2O. The polypeptide is Probable glutathione peroxidase 8-A (gpx8-a) (Xenopus laevis (African clawed frog)).